The following is a 768-amino-acid chain: Photosystem I P700 chlorophyll a apoprotein A1 (768 aa).

Transmembrane regions (helical) follow at residues 76-99 (VFSA…FHGA), 162-185 (LMAL…YHYH), 201-225 (LNHH…HIGA), 310-328 (ISHH…GHLY), 369-392 (WHAQ…HHMY), 408-434 (LGLF…IAMI), 456-478 (ALIS…LYIH), and 559-577 (FMIH…LILL). [4Fe-4S] cluster contacts are provided by C601 and C610. 2 consecutive transmembrane segments (helical) span residues 617 to 638 (HVFL…HFSW) and 682 to 704 (ISMY…MFLF). Residue H693 participates in divinylchlorophyll a' binding. The divinyl chlorophyll a site is built by M701 and Y709. W710 provides a ligand contact to phylloquinone. Residues 742–762 (AVGAAHFLLGGIATTWAFFHA) traverse the membrane as a helical segment.

This sequence belongs to the PsaA/PsaB family. As to quaternary structure, the PsaA/B heterodimer binds the P700 divinyl chlorophyll special pair and subsequent electron acceptors. PSI consists of a core antenna complex that captures photons, and an electron transfer chain that converts photonic excitation into a charge separation. The cyanobacterial PSI reaction center is composed of one copy each of PsaA,B,C,D,E,F,I,J,K,L,M and X, and forms trimeric complexes. It depends on PSI electron transfer chain: 5 divinyl chlorophyll a, 1 divinyl chlorophyll a', 2 phylloquinones and 3 4Fe-4S clusters. PSI core antenna: 90 divinyl chlorophyll a, 22 carotenoids, 3 phospholipids and 1 galactolipid. P700 is a divinyl chlorophyll a/divinyl chlorophyll a' dimer, A0 is one or more divinyl chlorophyll a, A1 is one or both phylloquinones and FX is a shared 4Fe-4S iron-sulfur center. as a cofactor.

Its subcellular location is the cellular thylakoid membrane. It catalyses the reaction reduced [plastocyanin] + hnu + oxidized [2Fe-2S]-[ferredoxin] = oxidized [plastocyanin] + reduced [2Fe-2S]-[ferredoxin]. In terms of biological role, psaA and PsaB bind P700, the primary electron donor of photosystem I (PSI), as well as the electron acceptors A0, A1 and FX. PSI is a plastocyanin/cytochrome c6-ferredoxin oxidoreductase, converting photonic excitation into a charge separation, which transfers an electron from the donor P700 chlorophyll pair to the spectroscopically characterized acceptors A0, A1, FX, FA and FB in turn. Oxidized P700 is reduced on the lumenal side of the thylakoid membrane by plastocyanin or cytochrome c6. This Prochlorococcus marinus (strain NATL2A) protein is Photosystem I P700 chlorophyll a apoprotein A1.